The sequence spans 844 residues: Prickle-like protein 2 (844 aa).

The PET domain maps to 18–126 (FDFQRNSTSD…NVRPFPVTMT (109 aa)). S92 carries the post-translational modification Phosphoserine. 3 consecutive LIM zinc-binding domains span residues 128 to 193 (AICE…CLKP), 193 to 253 (PRCA…LYAE), and 253 to 317 (EYCD…EDPN). 2 disordered regions span residues 314–350 (EDPN…TEEP) and 481–519 (ESYS…QQCR). Polar residues predominate over residues 318–327 (GSDSSDSAFQ). Phosphoserine is present on residues S319, S321, and S322. The span at 481–493 (ESYSDMSSQSFSE) shows a compositional bias: low complexity. T534, T536, and T539 each carry phosphothreonine. A phosphoserine mark is found at S543, S546, S607, and S642. Residues 639–709 (MHQSFDFDGG…HLASEREAIS (71 aa)) are disordered. Positions 682-692 (FRPHRSRRSRR) are enriched in basic residues. A compositionally biased stretch (basic and acidic residues) spans 693–709 (SRSDNALHLASEREAIS). S731 is modified (phosphoserine). Residues 822–844 (STLGGRGQLHSRKRQKSKNCIIS) are disordered. C841 bears the Cysteine methyl ester mark. The S-farnesyl cysteine moiety is linked to residue C841. The propeptide at 842–844 (IIS) is removed in mature form.

Belongs to the prickle / espinas / testin family. Expressed in brain, eye and testis. Additionally in fetal brain, adult cartilage, pancreatic islet, gastric cancer and uterus tumors.

It localises to the nucleus membrane. The chain is Prickle-like protein 2 (PRICKLE2) from Homo sapiens (Human).